A 227-amino-acid polypeptide reads, in one-letter code: PKHD-type hydroxylase Bphyt_7102 (227 aa).

The Fe2OG dioxygenase domain maps to 80-179 (QVYPPLFNRY…RIASFFWVQS (100 aa)). Residues H98, D100, and H160 each contribute to the Fe cation site. R170 provides a ligand contact to 2-oxoglutarate.

Fe(2+) is required as a cofactor. The cofactor is L-ascorbate.

The sequence is that of PKHD-type hydroxylase Bphyt_7102 from Paraburkholderia phytofirmans (strain DSM 17436 / LMG 22146 / PsJN) (Burkholderia phytofirmans).